The primary structure comprises 262 residues: MGKKKFIENEDGTTEVQETESEAPKDKKEKKEYRLRTLGANIKTSKKSFKEQFFMNYEDGLKLIKKMRGKGKGGQLVQKVMPRHISLPYHMSGKAAMEEACDWIAQNTVGKYRKEYKGIVVAVGSVDLASAPRVISDQYAFHTDVAINQIVFIPKIGDQYEAKVKYVQEGLMVGVVMDMITIHIKQNDKTSEDQVAIDDKILVKYSGIRIKSSLCHLKGEYVKMIEKAEIKEEEEVEDEADEETDVKEKVKEEEDEDEDMEE.

Disordered stretches follow at residues 1–30 and 232–262; these read MGKKKFIENEDGTTEVQETESEAPKDKKEK and EEEEVEDEADEETDVKEKVKEEEDEDEDMEE. 3 stretches are compositionally biased toward acidic residues: residues 9–21, 232–245, and 253–262; these read NEDGTTEVQETES, EEEEVEDEADEETD, and EEDEDEDMEE.

This is an uncharacterized protein from Caenorhabditis elegans.